Here is a 556-residue protein sequence, read N- to C-terminus: 2-succinyl-5-enolpyruvyl-6-hydroxy-3-cyclohexene-1-carboxylate synthase (556 aa).

This sequence belongs to the TPP enzyme family. MenD subfamily. As to quaternary structure, homodimer. Mg(2+) serves as cofactor. Mn(2+) is required as a cofactor. Requires thiamine diphosphate as cofactor.

The catalysed reaction is isochorismate + 2-oxoglutarate + H(+) = 5-enolpyruvoyl-6-hydroxy-2-succinyl-cyclohex-3-ene-1-carboxylate + CO2. The protein operates within quinol/quinone metabolism; 1,4-dihydroxy-2-naphthoate biosynthesis; 1,4-dihydroxy-2-naphthoate from chorismate: step 2/7. Its pathway is quinol/quinone metabolism; menaquinone biosynthesis. Catalyzes the thiamine diphosphate-dependent decarboxylation of 2-oxoglutarate and the subsequent addition of the resulting succinic semialdehyde-thiamine pyrophosphate anion to isochorismate to yield 2-succinyl-5-enolpyruvyl-6-hydroxy-3-cyclohexene-1-carboxylate (SEPHCHC). The protein is 2-succinyl-5-enolpyruvyl-6-hydroxy-3-cyclohexene-1-carboxylate synthase of Shigella flexneri serotype 5b (strain 8401).